The sequence spans 361 residues: DNA replication and repair protein RecF (361 aa).

ATP is bound at residue 30 to 37; it reads GANGSGKT.

This sequence belongs to the RecF family.

The protein localises to the cytoplasm. Functionally, the RecF protein is involved in DNA metabolism; it is required for DNA replication and normal SOS inducibility. RecF binds preferentially to single-stranded, linear DNA. It also seems to bind ATP. This Pectobacterium atrosepticum (strain SCRI 1043 / ATCC BAA-672) (Erwinia carotovora subsp. atroseptica) protein is DNA replication and repair protein RecF.